A 376-amino-acid polypeptide reads, in one-letter code: Adipocyte plasma membrane-associated protein (376 aa).

Residues 1–17 (MTFLMLAVSLAIPLLGA) form a helical membrane-spanning segment. Residue Asn120 is glycosylated (N-linked (GlcNAc...) asparagine).

This sequence belongs to the strictosidine synthase family.

The protein localises to the membrane. In terms of biological role, exhibits strong arylesterase activity with beta-naphthyl acetate and phenyl acetate. May play a role in adipocyte differentiation. The sequence is that of Adipocyte plasma membrane-associated protein (Apmap) from Rattus norvegicus (Rat).